The primary structure comprises 113 residues: Nucleoid-associated protein SAV_4556 (113 aa).

The protein belongs to the YbaB/EbfC family. As to quaternary structure, homodimer.

Its subcellular location is the cytoplasm. It is found in the nucleoid. In terms of biological role, binds to DNA and alters its conformation. May be involved in regulation of gene expression, nucleoid organization and DNA protection. This chain is Nucleoid-associated protein SAV_4556, found in Streptomyces avermitilis (strain ATCC 31267 / DSM 46492 / JCM 5070 / NBRC 14893 / NCIMB 12804 / NRRL 8165 / MA-4680).